The sequence spans 125 residues: Small ribosomal subunit protein uS12 (125 aa).

Asp89 bears the 3-methylthioaspartic acid mark.

This sequence belongs to the universal ribosomal protein uS12 family. Part of the 30S ribosomal subunit. Contacts proteins S8 and S17. May interact with IF1 in the 30S initiation complex.

Functionally, with S4 and S5 plays an important role in translational accuracy. Its function is as follows. Interacts with and stabilizes bases of the 16S rRNA that are involved in tRNA selection in the A site and with the mRNA backbone. Located at the interface of the 30S and 50S subunits, it traverses the body of the 30S subunit contacting proteins on the other side and probably holding the rRNA structure together. The combined cluster of proteins S8, S12 and S17 appears to hold together the shoulder and platform of the 30S subunit. This Cupriavidus pinatubonensis (strain JMP 134 / LMG 1197) (Cupriavidus necator (strain JMP 134)) protein is Small ribosomal subunit protein uS12.